The sequence spans 100 residues: MILQHILILSSFLFCLGIFGLITSQNMVKILICLELIFNAVNLNLVIFCKFFDSSAIIGNLFGLFIIAIAAAEAAIALAILLAMYRNRRSIRIDRFNILK.

The next 3 membrane-spanning stretches (helical) occupy residues 2 to 22, 28 to 48, and 61 to 81; these read ILQH…FGLI, VKIL…LVIF, and LFGL…LAIL.

The protein belongs to the complex I subunit 4L family. As to quaternary structure, NDH is composed of at least 16 different subunits, 5 of which are encoded in the nucleus.

Its subcellular location is the plastid. It is found in the chloroplast thylakoid membrane. It catalyses the reaction a plastoquinone + NADH + (n+1) H(+)(in) = a plastoquinol + NAD(+) + n H(+)(out). The catalysed reaction is a plastoquinone + NADPH + (n+1) H(+)(in) = a plastoquinol + NADP(+) + n H(+)(out). Its function is as follows. NDH shuttles electrons from NAD(P)H:plastoquinone, via FMN and iron-sulfur (Fe-S) centers, to quinones in the photosynthetic chain and possibly in a chloroplast respiratory chain. The immediate electron acceptor for the enzyme in this species is believed to be plastoquinone. Couples the redox reaction to proton translocation, and thus conserves the redox energy in a proton gradient. The protein is NAD(P)H-quinone oxidoreductase subunit 4L, chloroplastic of Chara vulgaris (Common stonewort).